The following is a 203-amino-acid chain: Small ribosomal subunit protein uS5 (203 aa).

Residues 1–18 are compositionally biased toward basic and acidic residues; sequence MENNVKKETIVDSEKVEK. The interval 1 to 36 is disordered; the sequence is MENNVKKETIVDSEKVEKQQPVTAPVVNKKENTQPK. The S5 DRBM domain maps to 49–112; sequence FEERVVKIKR…KNANNNLIKV (64 aa).

The protein belongs to the universal ribosomal protein uS5 family. As to quaternary structure, part of the 30S ribosomal subunit. Contacts proteins S4 and S8.

Functionally, with S4 and S12 plays an important role in translational accuracy. Located at the back of the 30S subunit body where it stabilizes the conformation of the head with respect to the body. In Ureaplasma urealyticum serovar 10 (strain ATCC 33699 / Western), this protein is Small ribosomal subunit protein uS5.